Consider the following 381-residue polypeptide: Succinyl-diaminopimelate desuccinylase (381 aa).

Histidine 72 is a Zn(2+) binding site. Residue aspartate 74 is part of the active site. Residue aspartate 105 coordinates Zn(2+). Catalysis depends on glutamate 139, which acts as the Proton acceptor. 3 residues coordinate Zn(2+): glutamate 140, glutamate 168, and histidine 354.

Belongs to the peptidase M20A family. DapE subfamily. In terms of assembly, homodimer. The cofactor is Zn(2+). Co(2+) is required as a cofactor.

It catalyses the reaction N-succinyl-(2S,6S)-2,6-diaminopimelate + H2O = (2S,6S)-2,6-diaminopimelate + succinate. It functions in the pathway amino-acid biosynthesis; L-lysine biosynthesis via DAP pathway; LL-2,6-diaminopimelate from (S)-tetrahydrodipicolinate (succinylase route): step 3/3. Functionally, catalyzes the hydrolysis of N-succinyl-L,L-diaminopimelic acid (SDAP), forming succinate and LL-2,6-diaminopimelate (DAP), an intermediate involved in the bacterial biosynthesis of lysine and meso-diaminopimelic acid, an essential component of bacterial cell walls. The sequence is that of Succinyl-diaminopimelate desuccinylase from Shewanella sp. (strain MR-7).